The sequence spans 72 residues: MAKEESIEIEGVIVDALPNAQFKVKLENGLEVLAHVSGKIRMHYIRILPGDKVKVQISPYDITKGRITYRYK.

The 72-residue stretch at 1–72 folds into the S1-like domain; that stretch reads MAKEESIEIE…TKGRITYRYK (72 aa).

Belongs to the IF-1 family. In terms of assembly, component of the 30S ribosomal translation pre-initiation complex which assembles on the 30S ribosome in the order IF-2 and IF-3, IF-1 and N-formylmethionyl-tRNA(fMet); mRNA recruitment can occur at any time during PIC assembly.

The protein localises to the cytoplasm. Functionally, one of the essential components for the initiation of protein synthesis. Stabilizes the binding of IF-2 and IF-3 on the 30S subunit to which N-formylmethionyl-tRNA(fMet) subsequently binds. Helps modulate mRNA selection, yielding the 30S pre-initiation complex (PIC). Upon addition of the 50S ribosomal subunit IF-1, IF-2 and IF-3 are released leaving the mature 70S translation initiation complex. The protein is Translation initiation factor IF-1 of Chlorobium chlorochromatii (strain CaD3).